Here is a 69-residue protein sequence, read N- to C-terminus: Sec-independent protein translocase protein TatA (69 aa).

Residues 1–21 traverse the membrane as a helical segment; the sequence is MFGLGGQELILILLIILLLFG.

The protein belongs to the TatA/E family. Forms a complex with TatC.

The protein localises to the cell inner membrane. Its function is as follows. Part of the twin-arginine translocation (Tat) system that transports large folded proteins containing a characteristic twin-arginine motif in their signal peptide across membranes. TatA could form the protein-conducting channel of the Tat system. This is Sec-independent protein translocase protein TatA from Chlorobium phaeovibrioides (strain DSM 265 / 1930) (Prosthecochloris vibrioformis (strain DSM 265)).